The chain runs to 37 residues: Large ribosomal subunit protein bL36 (37 aa).

Belongs to the bacterial ribosomal protein bL36 family.

This chain is Large ribosomal subunit protein bL36, found in Mycoplasmopsis synoviae (strain 53) (Mycoplasma synoviae).